A 639-amino-acid chain; its full sequence is tRNA-dihydrouridine(47) synthase [NAD(P)(+)]-like (639 aa).

2 stretches are compositionally biased toward polar residues: residues 1–19 (MAES…TVTQ) and 54–65 (QTCSELSGNDAE). Disordered stretches follow at residues 1 to 20 (MAES…VTQK) and 52 to 122 (DKQT…HSQF). Positions 66–85 (NTVRAEDAAEPEAKRIKLDD) are enriched in basic and acidic residues. Residues 103–119 (EKKRARGQNKSRPHMKH) are compositionally biased toward basic residues. 2 C3H1-type zinc fingers span residues 122-152 (FEEN…HDVA) and 160-190 (EDIR…HLGD). FMN is bound by residues 300 to 302 (PLT) and Gln354. Cys385 acts as the Proton donor in catalysis. FMN-binding positions include Lys424, His454, 486–488 (NGD), and 509–510 (AR).

Belongs to the Dus family. Dus3 subfamily. It depends on FMN as a cofactor.

It carries out the reaction 5,6-dihydrouridine(47) in tRNA + NAD(+) = uridine(47) in tRNA + NADH + H(+). It catalyses the reaction 5,6-dihydrouridine(47) in tRNA + NADP(+) = uridine(47) in tRNA + NADPH + H(+). The catalysed reaction is a 5,6-dihydrouridine in mRNA + NAD(+) = a uridine in mRNA + NADH + H(+). The enzyme catalyses a 5,6-dihydrouridine in mRNA + NADP(+) = a uridine in mRNA + NADPH + H(+). In terms of biological role, catalyzes the synthesis of dihydrouridine, a modified base, in various RNAs, such as tRNAs, mRNAs and some long non-coding RNAs (lncRNAs). Mainly modifies the uridine in position 47 (U47) in the D-loop of most cytoplasmic tRNAs. Also able to mediate the formation of dihydrouridine in some mRNAs, thereby regulating their translation. The sequence is that of tRNA-dihydrouridine(47) synthase [NAD(P)(+)]-like (dus3l) from Xenopus tropicalis (Western clawed frog).